A 158-amino-acid polypeptide reads, in one-letter code: MSFRGKRMKNVANQRYYLVREDVLTDAMQKTLEAKHLLSSGSVSSIWDAVKQVDLSRSAFYKYRDAVFPFHSIVQERILTVFLQLQDRKGTLAKLLETVTITHCNVLTIHQTIPIQGRANVTLSLDVTSMTCDLDDLIQQLKRLDFVESAEVISSGAL.

In terms of domain architecture, ACT spans 80–155; sequence TVFLQLQDRK…FVESAEVISS (76 aa).

This sequence belongs to the UPF0735 family.

In Lysinibacillus sphaericus (strain C3-41), this protein is UPF0735 ACT domain-containing protein Bsph_3944.